We begin with the raw amino-acid sequence, 261 residues long: Small ribosomal subunit protein uS2 (261 aa).

Positions 223–261 are disordered; it reads EGKQGQDDSEDVEKEMADKAAAEDDEEESIEVVVEKSED.

Belongs to the universal ribosomal protein uS2 family.

The protein is Small ribosomal subunit protein uS2 of Lactobacillus johnsonii (strain CNCM I-12250 / La1 / NCC 533).